An 898-amino-acid polypeptide reads, in one-letter code: Serine/threonine-protein kinase TAO3 (898 aa).

The Protein kinase domain occupies 24–277 (FVGLHEIGHG…SADLLRHDFV (254 aa)). Residues 30 to 38 (IGHGSFGAV) and Lys-53 each bind ATP. Residue Asp-147 is the Proton acceptor of the active site. Residues 316–374 (TRNGPLTESQEEEEDSEHGSNLSRKMDSLGSNHSIPSMSVSTGSQSSSVSSMQEVLDES) are disordered. Residues 334–351 (GSNLSRKMDSLGSNHSIP) show a composition bias toward polar residues. Over residues 352–368 (SMSVSTGSQSSSVSSMQ) the composition is skewed to low complexity. Coiled coils occupy residues 452-502 (EQEN…THAN), 548-649 (FLES…HAML), and 754-875 (LKSL…IETF). A disordered region spans residues 565-596 (EEMNEDHSTPKKEKQERISKHKENLQHTQAEE).

It belongs to the protein kinase superfamily. STE Ser/Thr protein kinase family. STE20 subfamily.

Its subcellular location is the cytoplasm. It is found in the cell membrane. It localises to the membrane raft. The protein localises to the lipid droplet. It carries out the reaction L-seryl-[protein] + ATP = O-phospho-L-seryl-[protein] + ADP + H(+). The enzyme catalyses L-threonyl-[protein] + ATP = O-phospho-L-threonyl-[protein] + ADP + H(+). Functionally, serine/threonine-protein kinase that acts as a regulator of the p38/MAPK14 stress-activated MAPK cascade and of the MAPK8/JNK cascade. In response to DNA damage, involved in the G2/M transition DNA damage checkpoint by activating the p38/MAPK14 stress-activated MAPK cascade, probably by mediating phosphorylation of upstream MAP kinase kinases. Inhibits basal activity of the MAPK8/JNK cascade. In Gallus gallus (Chicken), this protein is Serine/threonine-protein kinase TAO3 (TAOK3).